The primary structure comprises 203 residues: FMN-dependent NADH:quinone oxidoreductase (203 aa).

FMN-binding positions include serine 9, 15–17 (SVS), and 139–142 (TRGG).

It belongs to the azoreductase type 1 family. In terms of assembly, homodimer. It depends on FMN as a cofactor.

It catalyses the reaction 2 a quinone + NADH + H(+) = 2 a 1,4-benzosemiquinone + NAD(+). The catalysed reaction is N,N-dimethyl-1,4-phenylenediamine + anthranilate + 2 NAD(+) = 2-(4-dimethylaminophenyl)diazenylbenzoate + 2 NADH + 2 H(+). Functionally, quinone reductase that provides resistance to thiol-specific stress caused by electrophilic quinones. In terms of biological role, also exhibits azoreductase activity. Catalyzes the reductive cleavage of the azo bond in aromatic azo compounds to the corresponding amines. The protein is FMN-dependent NADH:quinone oxidoreductase of Albidiferax ferrireducens (strain ATCC BAA-621 / DSM 15236 / T118) (Rhodoferax ferrireducens).